The sequence spans 339 residues: Holliday junction branch migration complex subunit RuvB (339 aa).

Residues 1-187 (MQGFEDENRI…FGVICKLDYY (187 aa)) are large ATPase domain (RuvB-L). Residues L26, R27, G68, K71, T72, T73, 134 to 136 (EDF), R177, Y187, and R224 each bind ATP. T72 contributes to the Mg(2+) binding site. The small ATPAse domain (RuvB-S) stretch occupies residues 188-258 (TVDELSKIVL…VAKDALELLG (71 aa)). The segment at 261-339 (SLGLDFVDEK…HLKIPYPNEK (79 aa)) is head domain (RuvB-H). The DNA site is built by R297, R316, and R321.

Belongs to the RuvB family. Homohexamer. Forms an RuvA(8)-RuvB(12)-Holliday junction (HJ) complex. HJ DNA is sandwiched between 2 RuvA tetramers; dsDNA enters through RuvA and exits via RuvB. An RuvB hexamer assembles on each DNA strand where it exits the tetramer. Each RuvB hexamer is contacted by two RuvA subunits (via domain III) on 2 adjacent RuvB subunits; this complex drives branch migration. In the full resolvosome a probable DNA-RuvA(4)-RuvB(12)-RuvC(2) complex forms which resolves the HJ.

The protein resides in the cytoplasm. The catalysed reaction is ATP + H2O = ADP + phosphate + H(+). Its function is as follows. The RuvA-RuvB-RuvC complex processes Holliday junction (HJ) DNA during genetic recombination and DNA repair, while the RuvA-RuvB complex plays an important role in the rescue of blocked DNA replication forks via replication fork reversal (RFR). RuvA specifically binds to HJ cruciform DNA, conferring on it an open structure. The RuvB hexamer acts as an ATP-dependent pump, pulling dsDNA into and through the RuvAB complex. RuvB forms 2 homohexamers on either side of HJ DNA bound by 1 or 2 RuvA tetramers; 4 subunits per hexamer contact DNA at a time. Coordinated motions by a converter formed by DNA-disengaged RuvB subunits stimulates ATP hydrolysis and nucleotide exchange. Immobilization of the converter enables RuvB to convert the ATP-contained energy into a lever motion, pulling 2 nucleotides of DNA out of the RuvA tetramer per ATP hydrolyzed, thus driving DNA branch migration. The RuvB motors rotate together with the DNA substrate, which together with the progressing nucleotide cycle form the mechanistic basis for DNA recombination by continuous HJ branch migration. Branch migration allows RuvC to scan DNA until it finds its consensus sequence, where it cleaves and resolves cruciform DNA. The sequence is that of Holliday junction branch migration complex subunit RuvB from Clostridioides difficile (strain 630) (Peptoclostridium difficile).